Here is a 172-residue protein sequence, read N- to C-terminus: Myosin regulatory light chain 12B (172 aa).

The span at 1 to 16 shows a compositional bias: basic residues; it reads MSSKKAKTKTTKKRPQ. Positions 1-20 are disordered; the sequence is MSSKKAKTKTTKKRPQRATS. T19 is subject to Phosphothreonine; by MLCK and ZIPK/DAPK3. The residue at position 20 (S20) is a Phosphoserine; by MLCK and ZIPK/DAPK3. 3 EF-hand domains span residues 29 to 64, 98 to 133, and 134 to 169; these read SQIQ…LGKN, DPED…MGDR, and FTDE…GAKD. Positions 42, 44, 46, and 53 each coordinate Ca(2+).

As to quaternary structure, myosin is a hexamer of 2 heavy chains and 4 light chains: interacts with myosin heavy chain MYO19. In terms of processing, phosphorylation increases the actin-activated myosin ATPase activity and thereby regulates the contractile activity. It is required to generate the driving force in the migration of the cells but not necessary for localization of myosin-2 at the leading edge. Phosphorylation is reduced following epigallocatechin-3-O-gallate treatment.

In terms of biological role, myosin regulatory subunit that plays an important role in regulation of both smooth muscle and nonmuscle cell contractile activity via its phosphorylation. Phosphorylation triggers actin polymerization in vascular smooth muscle. Implicated in cytokinesis, receptor capping, and cell locomotion. This is Myosin regulatory light chain 12B (Myl12b) from Rattus norvegicus (Rat).